A 300-amino-acid polypeptide reads, in one-letter code: MKIAILSRDGTLYSCKRLREAAIQRGHLVEILDPLSCYMNINPAASSIHYKGRKLPHFDAVIPRIGTAITFYGTAALRQFEMLGSYPLNESVAIARARDKLRSMQLLARQGIDLPVTGIAHSPDDTSDLIDMVGGAPLVVKLVEGTQGIGVVLAETRQAAESVIDAFRGLNAYILVQEYIKEAQGCDIRCLVVGDEVVAAIERRAKEGDFRSNLHRGGAASVASITPQEREIAIKAARTMALDVAGVDILRANRGPLVMEVNASPGLEGIEKTTGIDIAGKMIRWIERHATTEYCLKTGG.

Positions 104-287 constitute an ATP-grasp domain; sequence MQLLARQGID…IAGKMIRWIE (184 aa). Residues lysine 141, 178-179, aspartate 187, and 211-213 each bind ATP; these read EY and RSN. Aspartate 248, glutamate 260, and asparagine 262 together coordinate Mg(2+). Positions 248, 260, and 262 each coordinate Mn(2+).

Belongs to the RimK family. Mg(2+) serves as cofactor. It depends on Mn(2+) as a cofactor.

Its function is as follows. An L-glutamate ligase that catalyzes the ATP-dependent post-translational addition of glutamate residues to the C-terminus of ribosomal protein bS6 (RpsF). Is also able to catalyze the synthesis of poly-alpha-glutamate in vitro, via ATP hydrolysis from unprotected glutamate as substrate. The number of glutamate residues added to either RpsF or to poly-alpha-glutamate changes with pH. The polypeptide is Ribosomal protein bS6--L-glutamate ligase (Escherichia coli O139:H28 (strain E24377A / ETEC)).